Consider the following 594-residue polypeptide: Putative 3,4-dihydroxy-2-butanone kinase (594 aa).

The region spanning 11–341 (DPNDVVTEFI…LDAPTKAPNW (331 aa)) is the DhaK domain. Substrate is bound by residues 62-65 (GSGH), Lys-113, and Asp-118. The active-site Tele-hemiaminal-histidine intermediate is His-226. Positions 339–358 (PNWPVGAEGNRPPAKIPVPL) are disordered. The DhaL domain occupies 381–585 (HILETAIEAA…AAAWYRAAAL (205 aa)). ATP is bound by residues 410–413 (DGDC), 455–456 (TS), Gly-499, 507–508 (TL), and 570–572 (DPG).

The protein belongs to the dihydroxyacetone kinase (DAK) family.

The protein is Putative 3,4-dihydroxy-2-butanone kinase (DHBK) of Solanum lycopersicum (Tomato).